Reading from the N-terminus, the 123-residue chain is cAMP-responsive element-binding protein-like 2 (123 aa).

A disordered region spans residues 1–24 (MDDSKVVGGKVKKPGKRGRKPAKI). Over residues 10–21 (KVKKPGKRGRKP) the composition is skewed to basic residues. A bZIP domain is found at 23–86 (KIDLKAKLER…MAMDQGKIPS (64 aa)). The interval 29-60 (KLERSRQSARECRARKKLRYQYLEELVSSRER) is basic motif. The leucine-zipper stretch occupies residues 62-69 (ICALREEL). The segment at 92–123 (LTGEEQSKPQQNSSRHPKAGKTDANTNSLVGN) is disordered. A compositionally biased stretch (polar residues) spans 114–123 (DANTNSLVGN).

Belongs to the bZIP family. ATF subfamily. In terms of assembly, interacts with CREB1; regulates CREB1 phosphorylation, stability and transcriptional activity. Post-translationally, phosphorylated by AMPK. Widely expressed with higher expression in adipose tissue, skeletal muscle, and liver (at protein level).

Its subcellular location is the nucleus. In terms of biological role, probable regulator of CREB1 transcriptional activity which is involved in adipose cells differentiation. May also play a regulatory role in the cell cycle. This Mus musculus (Mouse) protein is cAMP-responsive element-binding protein-like 2 (Crebl2).